Reading from the N-terminus, the 146-residue chain is Large ribosomal subunit protein uL22 (146 aa).

The protein belongs to the universal ribosomal protein uL22 family. Part of the 50S ribosomal subunit.

This protein binds specifically to 23S rRNA; its binding is stimulated by other ribosomal proteins, e.g. L4, L17, and L20. It is important during the early stages of 50S assembly. It makes multiple contacts with different domains of the 23S rRNA in the assembled 50S subunit and ribosome. In terms of biological role, the globular domain of the protein is located near the polypeptide exit tunnel on the outside of the subunit, while an extended beta-hairpin is found that lines the wall of the exit tunnel in the center of the 70S ribosome. The chain is Large ribosomal subunit protein uL22 from Nocardioides sp. (strain ATCC BAA-499 / JS614).